A 286-amino-acid polypeptide reads, in one-letter code: Tyrosine recombinase Tlet_1492 (286 aa).

The Core-binding (CB) domain occupies Met1–Gln86. Residues Arg107 to Asn280 form the Tyr recombinase domain. Residues Arg143, Lys168, His232, Arg235, and His258 contribute to the active site. The O-(3'-phospho-DNA)-tyrosine intermediate role is filled by Tyr267.

It belongs to the 'phage' integrase family.

It localises to the cytoplasm. Its function is as follows. Site-specific tyrosine recombinase, which acts by catalyzing the cutting and rejoining of the recombining DNA molecules. The polypeptide is Tyrosine recombinase Tlet_1492 (Pseudothermotoga lettingae (strain ATCC BAA-301 / DSM 14385 / NBRC 107922 / TMO) (Thermotoga lettingae)).